The primary structure comprises 123 residues: MPTINQLIRIGRENKRDKSTAPALKCCPQKRGVCTRVYTTTPKKPNSALRKVARVRLTNGIEVTSYIPGVGHNLQEHSVVLIRGGRVKDLPGVRYHIVRGTLDSVGVKDRKKSRSKYGAKRPK.

Asp-89 is modified (3-methylthioaspartic acid). The disordered stretch occupies residues 104 to 123 (SVGVKDRKKSRSKYGAKRPK). Basic residues predominate over residues 109 to 123 (DRKKSRSKYGAKRPK).

This sequence belongs to the universal ribosomal protein uS12 family. As to quaternary structure, part of the 30S ribosomal subunit. Contacts proteins S8 and S17. May interact with IF1 in the 30S initiation complex.

With S4 and S5 plays an important role in translational accuracy. Functionally, interacts with and stabilizes bases of the 16S rRNA that are involved in tRNA selection in the A site and with the mRNA backbone. Located at the interface of the 30S and 50S subunits, it traverses the body of the 30S subunit contacting proteins on the other side and probably holding the rRNA structure together. The combined cluster of proteins S8, S12 and S17 appears to hold together the shoulder and platform of the 30S subunit. This is Small ribosomal subunit protein uS12 from Pelobacter propionicus (strain DSM 2379 / NBRC 103807 / OttBd1).